Reading from the N-terminus, the 718-residue chain is Protein Hook homolog 3 (718 aa).

M1 carries the N-acetylmethionine modification. Residues 1-164 (MFNVESVERV…QELMSKESPV (164 aa)) are sufficient for interaction with microtubules. S6 carries the phosphoserine modification. A Calponin-homology (CH) domain is found at 10–126 (VELCESLLTW…RMLQLILGCA (117 aa)). Coiled coils occupy residues 168–433 (HDAY…VQAQ) and 462–663 (EIRE…MEEK). Residue S238 is modified to Phosphoserine. The sufficient for interaction with IIGP1 stretch occupies residues 450–671 (SSDSLAAEIV…EKYIVSAWYN (222 aa)). A required for association with Golgi region spans residues 553 to 718 (EKLHEANNEL…PGHVQPATAR (166 aa)). Positions 682 to 718 (EDRLASTGSGQSFLARQRQATSTRRSYPGHVQPATAR) are disordered. The span at 687–706 (STGSGQSFLARQRQATSTRR) shows a compositional bias: polar residues. Phosphoserine occurs at positions 693 and 707.

The protein belongs to the hook family. As to quaternary structure, self-associates. Component of the FTS/Hook/FHIP complex (FHF complex), composed of AKTIP/FTS, FHIP1B, and one or more members of the Hook family of proteins HOOK1, HOOK2, and HOOK3. May interact directly with AKTIP/FTS, HOOK1 and HOOK2. Associates with several subunits of the homotypic vesicular sorting complex (the HOPS complex) including VPS16 and VPS41; these interactions may be indirect. Interacts with IIGP1. Interacts with MSR1, and this association is stimulated by ligand binding to MSR1. Interacts with microtubules. Part of a tripartite complex with dynein and dynactin, acts an adapter linking the dynein motor complex and dynactin. Interacts with dynein intermediate chain and dynactin (DCTN1). Interacts with CCDC181. Interacts with LRGUK. In terms of assembly, (Microbial infection) Interacts with Salmonella typhimurium spiC. As to expression, expressed in brain, cerebellum, heart, intestine, kidney, liver, lung, skeletal muscle, spleen and stomach (at protein level).

The protein resides in the cytoplasm. The protein localises to the cytoskeleton. It localises to the golgi apparatus. Acts as an adapter protein linking the dynein motor complex to various cargos and converts dynein from a non-processive to a highly processive motor in the presence of dynactin. Facilitates the interaction between dynein and dynactin and activates dynein processivity (the ability to move along a microtubule for a long distance without falling off the track). Predominantly recruits 2 dyneins, which increases both the force and speed of the microtubule motor. Component of the FTS/Hook/FHIP complex (FHF complex). The FHF complex may function to promote vesicle trafficking and/or fusion via the homotypic vesicular protein sorting complex (the HOPS complex). May regulate clearance of endocytosed receptors such as MSR1. Participates in defining the architecture and localization of the Golgi complex. FHF complex promotes the distribution of AP-4 complex to the perinuclear area of the cell. In terms of biological role, (Microbial infection) Serves as a target for the spiC protein from Salmonella typhimurium, which inactivates it, leading to a strong alteration in cellular trafficking. The polypeptide is Protein Hook homolog 3 (Hook3) (Mus musculus (Mouse)).